The chain runs to 359 residues: MAEHGAHFTAASVADDQPSIFEVVAQDSLMTAVRPALQHVVKVLAESNPTHYGFLWRWFDEIFTLLDLLLQQHYLSRTSASFSENFYGLKRIVMGDTHKSQRLASAGLPKQQLWKSIMFLVLLPYLKVKLEKLVSSLREEDEYSIHPPSSRWKRFYRAFLAAYPFVNMAWEGWFLVQQLRYILGKAQHHSPLLRLAGVQLGRLTVQDIQALEHKPAKASMMQQPARSVSEKINSALKKAVGGVALSLSTGLSVGVFFLQFLDWWYSSENQETIKSLTALPTPPPPVHLDYNSDSPLLPKMKTVCPLCRKTRVNDTVLATSGYVFCYRCVFHYVRSHQACPITGYPTEVQHLIKLYSPEN.

At 1–19 (MAEHGAHFTAASVADDQPS) the chain is on the peroxisomal matrix side. The chain crosses the membrane as a helical span at residues 20–47 (IFEVVAQDSLMTAVRPALQHVVKVLAES). The Cytoplasmic segment spans residues 48 to 51 (NPTH). Residues 52–76 (YGFLWRWFDEIFTLLDLLLQQHYLS) traverse the membrane as a helical segment. The Peroxisomal matrix segment spans residues 77 to 109 (RTSASFSENFYGLKRIVMGDTHKSQRLASAGLP). The chain crosses the membrane as a helical span at residues 110 to 139 (KQQLWKSIMFLVLLPYLKVKLEKLVSSLRE). At 140-144 (EDEYS) the chain is on the cytoplasmic side. The helical transmembrane segment at 145-183 (IHPPSSRWKRFYRAFLAAYPFVNMAWEGWFLVQQLRYIL) threads the bilayer. Residues 184 to 249 (GKAQHHSPLL…VGGVALSLST (66 aa)) lie on the Peroxisomal matrix side of the membrane. Residues 250–277 (GLSVGVFFLQFLDWWYSSENQETIKSLT) form a helical membrane-spanning segment. The Cytoplasmic segment spans residues 278–359 (ALPTPPPPVH…HLIKLYSPEN (82 aa)). 4 residues coordinate Zn(2+): cysteine 304, cysteine 307, cysteine 325, and cysteine 328. The segment at 304-343 (CPLCRKTRVNDTVLATSGYVFCYRCVFHYVRSHQACPITG) adopts an RING-type; degenerate zinc-finger fold.

Belongs to the pex2/pex10/pex12 family. Component of the PEX2-PEX10-PEX12 retrotranslocation channel, composed of PEX2, PEX10 and PEX12. Interacts with PEX19 via its cytoplasmic domain.

The protein resides in the peroxisome membrane. The protein operates within protein modification; protein ubiquitination. In terms of biological role, component of a retrotranslocation channel required for peroxisome organization by mediating export of the PEX5 receptor from peroxisomes to the cytosol, thereby promoting PEX5 recycling. The retrotranslocation channel is composed of PEX2, PEX10 and PEX12; each subunit contributing transmembrane segments that coassemble into an open channel that specifically allows the passage of PEX5 through the peroxisomal membrane. PEX12 also regulates PEX5 recycling by activating the E3 ubiquitin-protein ligase activity of PEX10. When PEX5 recycling is compromised, PEX12 stimulates PEX10-mediated polyubiquitination of PEX5, leading to its subsequent degradation. The chain is Peroxisome assembly protein 12 from Homo sapiens (Human).